We begin with the raw amino-acid sequence, 541 residues long: Chaperonin GroEL (541 aa).

ATP contacts are provided by residues 29 to 32, 86 to 90, Gly413, 480 to 482, and Asp496; these read TLGP, DGTTT, and NAA.

It belongs to the chaperonin (HSP60) family. Forms a cylinder of 14 subunits composed of two heptameric rings stacked back-to-back. Interacts with the co-chaperonin GroES.

Its subcellular location is the cytoplasm. The catalysed reaction is ATP + H2O + a folded polypeptide = ADP + phosphate + an unfolded polypeptide.. Functionally, together with its co-chaperonin GroES, plays an essential role in assisting protein folding. The GroEL-GroES system forms a nano-cage that allows encapsulation of the non-native substrate proteins and provides a physical environment optimized to promote and accelerate protein folding. This is Chaperonin GroEL from Gardnerella vaginalis.